Reading from the N-terminus, the 126-residue chain is Glycine cleavage system H protein (126 aa).

The Lipoyl-binding domain occupies 24–105 (TLTVGITDHA…AYGVWLFKLK (82 aa)). An N6-lipoyllysine modification is found at lysine 65.

It belongs to the GcvH family. As to quaternary structure, the glycine cleavage system is composed of four proteins: P, T, L and H. (R)-lipoate serves as cofactor.

The glycine cleavage system catalyzes the degradation of glycine. The H protein shuttles the methylamine group of glycine from the P protein to the T protein. This is Glycine cleavage system H protein from Burkholderia vietnamiensis (strain G4 / LMG 22486) (Burkholderia cepacia (strain R1808)).